The chain runs to 250 residues: Ubiquinone/menaquinone biosynthesis C-methyltransferase UbiE (250 aa).

Residues threonine 73, aspartate 94, and 122–123 each bind S-adenosyl-L-methionine; that span reads DA.

Belongs to the class I-like SAM-binding methyltransferase superfamily. MenG/UbiE family.

It catalyses the reaction a 2-demethylmenaquinol + S-adenosyl-L-methionine = a menaquinol + S-adenosyl-L-homocysteine + H(+). It carries out the reaction a 2-methoxy-6-(all-trans-polyprenyl)benzene-1,4-diol + S-adenosyl-L-methionine = a 5-methoxy-2-methyl-3-(all-trans-polyprenyl)benzene-1,4-diol + S-adenosyl-L-homocysteine + H(+). It participates in quinol/quinone metabolism; menaquinone biosynthesis; menaquinol from 1,4-dihydroxy-2-naphthoate: step 2/2. It functions in the pathway cofactor biosynthesis; ubiquinone biosynthesis. Its function is as follows. Methyltransferase required for the conversion of demethylmenaquinol (DMKH2) to menaquinol (MKH2) and the conversion of 2-polyprenyl-6-methoxy-1,4-benzoquinol (DDMQH2) to 2-polyprenyl-3-methyl-6-methoxy-1,4-benzoquinol (DMQH2). In Coxiella burnetii (strain RSA 331 / Henzerling II), this protein is Ubiquinone/menaquinone biosynthesis C-methyltransferase UbiE.